The sequence spans 188 residues: Elongation factor P (188 aa).

This sequence belongs to the elongation factor P family.

The protein resides in the cytoplasm. It functions in the pathway protein biosynthesis; polypeptide chain elongation. Its function is as follows. Involved in peptide bond synthesis. Stimulates efficient translation and peptide-bond synthesis on native or reconstituted 70S ribosomes in vitro. Probably functions indirectly by altering the affinity of the ribosome for aminoacyl-tRNA, thus increasing their reactivity as acceptors for peptidyl transferase. This chain is Elongation factor P, found in Chloroherpeton thalassium (strain ATCC 35110 / GB-78).